The following is a 203-amino-acid chain: DNA-binding transcriptional repressor ScoC (203 aa).

Residues 13-157 (ALVFTQKMAQ…MMCMIRHIYG (145 aa)) enclose the HTH marR-type domain. The segment at residues 63 to 86 (ISEIAKFGVMHVSTAFNFSKKLEE) is a DNA-binding region (H-T-H motif). Residues 183-203 (KKKAKDSAADEPAEELEPVNS) are disordered. Acidic residues predominate over residues 191 to 203 (ADEPAEELEPVNS).

As to quaternary structure, homodimer. Interacts with SinR.

Negative regulator of protease production and sporulation. Acts by binding directly to the promoter of protease genes (aprE and nprE), and by repressing oligopeptide permease operons (appABCDF and oppABCDF), thereby preventing uptake of oligopeptides required for initiation of sporulation. Acts with SinR as a corepressor of epr expression. Binds to non-m6A-5-methylated 5'-GACGAG-3' sites, tested with scpA; when the target is methylated by DnmA, this repressor no longer binds and transcription is up-regulated. This Bacillus subtilis (strain 168) protein is DNA-binding transcriptional repressor ScoC.